A 119-amino-acid polypeptide reads, in one-letter code: Large ribosomal subunit protein uL22c (119 aa).

The protein belongs to the universal ribosomal protein uL22 family. Part of the 50S ribosomal subunit.

It is found in the plastid. Its subcellular location is the chloroplast. This protein binds specifically to 23S rRNA. Its function is as follows. The globular domain of the protein is located near the polypeptide exit tunnel on the outside of the subunit, while an extended beta-hairpin is found that lines the wall of the exit tunnel in the center of the 70S ribosome. The protein is Large ribosomal subunit protein uL22c (rpl22) of Marchantia polymorpha (Common liverwort).